A 201-amino-acid polypeptide reads, in one-letter code: Holliday junction resolvase RecU (201 aa).

Residues Thr-85, Asp-87, Glu-100, and Gln-119 each contribute to the Mg(2+) site.

The protein belongs to the RecU family. Mg(2+) serves as cofactor.

The protein resides in the cytoplasm. It carries out the reaction Endonucleolytic cleavage at a junction such as a reciprocal single-stranded crossover between two homologous DNA duplexes (Holliday junction).. In terms of biological role, endonuclease that resolves Holliday junction intermediates in genetic recombination. Cleaves mobile four-strand junctions by introducing symmetrical nicks in paired strands. Promotes annealing of linear ssDNA with homologous dsDNA. Required for DNA repair, homologous recombination and chromosome segregation. This chain is Holliday junction resolvase RecU, found in Geobacillus thermodenitrificans (strain NG80-2).